The primary structure comprises 693 residues: Golgin subfamily A member 6B (693 aa).

The span at 1 to 11 shows a compositional bias: pro residues; sequence MWPQPYLPPHP. 4 disordered regions span residues 1–72, 497–551, 629–650, and 660–679; these read MWPQ…SQYQ, LPGE…VERR, NPAD…AGEQ, and NNVE…DNPT. Positions 77–611 form a coiled coil; that stretch reads ALESSSVTIS…KLLELQELVL (535 aa). Residues 537–551 are compositionally biased toward basic and acidic residues; it reads LPKEKADGTEQVERR.

The protein belongs to the GOLGA6 family.

The polypeptide is Golgin subfamily A member 6B (GOLGA6B) (Homo sapiens (Human)).